Here is a 149-residue protein sequence, read N- to C-terminus: Nucleoside diphosphate kinase (149 aa).

ATP-binding residues include Lys-9, Phe-57, Arg-85, Thr-91, Arg-102, and Asn-112. Residue His-115 is the Pros-phosphohistidine intermediate of the active site.

This sequence belongs to the NDK family. Homotetramer. It depends on Mg(2+) as a cofactor.

It is found in the cytoplasm. The catalysed reaction is a 2'-deoxyribonucleoside 5'-diphosphate + ATP = a 2'-deoxyribonucleoside 5'-triphosphate + ADP. It carries out the reaction a ribonucleoside 5'-diphosphate + ATP = a ribonucleoside 5'-triphosphate + ADP. Functionally, major role in the synthesis of nucleoside triphosphates other than ATP. The ATP gamma phosphate is transferred to the NDP beta phosphate via a ping-pong mechanism, using a phosphorylated active-site intermediate. In Thermomicrobium roseum (strain ATCC 27502 / DSM 5159 / P-2), this protein is Nucleoside diphosphate kinase.